The sequence spans 150 residues: Large ribosomal subunit protein uL15 (150 aa).

Over residues 1–15 (MNLSNLQPAEGSTHN) the composition is skewed to polar residues. A disordered region spans residues 1 to 53 (MNLSNLQPAEGSTHNQNKRVGRGEGSGKGGTAARGHKGAKSRSGYSKKIGFEG). Gly residues predominate over residues 23 to 32 (GEGSGKGGTA).

Belongs to the universal ribosomal protein uL15 family. As to quaternary structure, part of the 50S ribosomal subunit.

In terms of biological role, binds to the 23S rRNA. This Flavobacterium johnsoniae (strain ATCC 17061 / DSM 2064 / JCM 8514 / BCRC 14874 / CCUG 350202 / NBRC 14942 / NCIMB 11054 / UW101) (Cytophaga johnsonae) protein is Large ribosomal subunit protein uL15.